The following is a 401-amino-acid chain: 1-deoxy-D-xylulose 5-phosphate reductoisomerase (401 aa).

The NADPH site is built by threonine 10, glycine 11, serine 12, isoleucine 13, glycine 36, arginine 37, asparagine 38, and asparagine 124. Lysine 125 serves as a coordination point for 1-deoxy-D-xylulose 5-phosphate. Glutamate 126 lines the NADPH pocket. Position 150 (aspartate 150) interacts with Mn(2+). 1-deoxy-D-xylulose 5-phosphate-binding residues include serine 151, glutamate 152, serine 176, and histidine 199. Residue glutamate 152 coordinates Mn(2+). Glycine 205 provides a ligand contact to NADPH. 1-deoxy-D-xylulose 5-phosphate-binding residues include serine 212, asparagine 217, lysine 218, and glutamate 221. Glutamate 221 is a Mn(2+) binding site.

The protein belongs to the DXR family. Mg(2+) serves as cofactor. Requires Mn(2+) as cofactor.

The enzyme catalyses 2-C-methyl-D-erythritol 4-phosphate + NADP(+) = 1-deoxy-D-xylulose 5-phosphate + NADPH + H(+). It participates in isoprenoid biosynthesis; isopentenyl diphosphate biosynthesis via DXP pathway; isopentenyl diphosphate from 1-deoxy-D-xylulose 5-phosphate: step 1/6. Its function is as follows. Catalyzes the NADPH-dependent rearrangement and reduction of 1-deoxy-D-xylulose-5-phosphate (DXP) to 2-C-methyl-D-erythritol 4-phosphate (MEP). The sequence is that of 1-deoxy-D-xylulose 5-phosphate reductoisomerase from Acaryochloris marina (strain MBIC 11017).